Reading from the N-terminus, the 592-residue chain is E3 ubiquitin-protein ligase RNF180 (592 aa).

The Cytoplasmic segment spans residues 1-564 (MKRSEESTST…DSRGWWFDMD (564 aa)). At Ser-231 the chain carries Phosphoserine. An interaction with ZIC2 region spans residues 282 to 489 (QSPPSFDPNM…VFLQTELNNA (208 aa)). The RING-type zinc finger occupies 432–474 (CAVCLDVYFNPYMCYPCHHIFCEPCLRTLAKDNPASTPCPLCR). The chain crosses the membrane as a helical span at residues 565–585 (MVIIYIYSVNWVIGFVVFCFL). Residues 586–592 (CYFFFPF) lie on the Extracellular side of the membrane.

In terms of assembly, interacts with ZIC2. As to expression, brain, kidney, testis and uterus. membrane protein. Nucleus envelope.

It is found in the endoplasmic reticulum membrane. Its subcellular location is the nucleus envelope. The enzyme catalyses S-ubiquitinyl-[E2 ubiquitin-conjugating enzyme]-L-cysteine + [acceptor protein]-L-lysine = [E2 ubiquitin-conjugating enzyme]-L-cysteine + N(6)-ubiquitinyl-[acceptor protein]-L-lysine.. It participates in protein modification; protein ubiquitination. E3 ubiquitin-protein ligase which promotes polyubiquitination and degradation by the proteasome pathway of ZIC2. The polypeptide is E3 ubiquitin-protein ligase RNF180 (Rnf180) (Mus musculus (Mouse)).